Here is a 352-residue protein sequence, read N- to C-terminus: Small ribosomal subunit biogenesis GTPase RsgA (352 aa).

Residues 109–277 enclose the CP-type G domain; it reads DTVLKRPDMY…LIDSPGIREF (169 aa). GTP is bound by residues 165-168 and 219-227; these read NKAD and GQSGVGKSS. Positions 301, 306, 308, and 314 each coordinate Zn(2+).

This sequence belongs to the TRAFAC class YlqF/YawG GTPase family. RsgA subfamily. Monomer. Associates with 30S ribosomal subunit, binds 16S rRNA. Zn(2+) is required as a cofactor.

It localises to the cytoplasm. Functionally, one of several proteins that assist in the late maturation steps of the functional core of the 30S ribosomal subunit. Helps release RbfA from mature subunits. May play a role in the assembly of ribosomal proteins into the subunit. Circularly permuted GTPase that catalyzes slow GTP hydrolysis, GTPase activity is stimulated by the 30S ribosomal subunit. The polypeptide is Small ribosomal subunit biogenesis GTPase RsgA (Alcanivorax borkumensis (strain ATCC 700651 / DSM 11573 / NCIMB 13689 / SK2)).